We begin with the raw amino-acid sequence, 251 residues long: Electron transfer flavoprotein subunit beta, mitochondrial (251 aa).

Belongs to the ETF beta-subunit/FixA family. As to quaternary structure, heterodimer of an alpha and a beta subunit. It depends on FAD as a cofactor. AMP serves as cofactor.

The protein localises to the mitochondrion matrix. In terms of biological role, the electron transfer flavoprotein serves as a specific electron acceptor for several dehydrogenases, including five acyl-CoA dehydrogenases, glutaryl-CoA and sarcosine dehydrogenase. It transfers the electrons to the main mitochondrial respiratory chain via ETF-ubiquinone oxidoreductase (ETF dehydrogenase). Involved in leucine catabolism and in phytol degradation. The polypeptide is Electron transfer flavoprotein subunit beta, mitochondrial (ETFB) (Arabidopsis thaliana (Mouse-ear cress)).